The following is a 185-amino-acid chain: Ribosome-recycling factor (185 aa).

The protein belongs to the RRF family.

The protein localises to the cytoplasm. Functionally, responsible for the release of ribosomes from messenger RNA at the termination of protein biosynthesis. May increase the efficiency of translation by recycling ribosomes from one round of translation to another. This chain is Ribosome-recycling factor, found in Actinobacillus pleuropneumoniae serotype 5b (strain L20).